A 76-amino-acid chain; its full sequence is Small ribosomal subunit protein eS17 (76 aa).

The protein belongs to the eukaryotic ribosomal protein eS17 family.

This chain is Small ribosomal subunit protein eS17, found in Metallosphaera sedula (strain ATCC 51363 / DSM 5348 / JCM 9185 / NBRC 15509 / TH2).